Consider the following 209-residue polypeptide: Uracil phosphoribosyltransferase (209 aa).

Residues Arg-79, Arg-104, and 131–139 each bind 5-phospho-alpha-D-ribose 1-diphosphate; that span reads DPMLATGGS. Uracil contacts are provided by residues Ile-194 and 199 to 201; that span reads GDA. Residue Asp-200 coordinates 5-phospho-alpha-D-ribose 1-diphosphate.

It belongs to the UPRTase family. Mg(2+) serves as cofactor.

The enzyme catalyses UMP + diphosphate = 5-phospho-alpha-D-ribose 1-diphosphate + uracil. The protein operates within pyrimidine metabolism; UMP biosynthesis via salvage pathway; UMP from uracil: step 1/1. With respect to regulation, allosterically activated by GTP. Its function is as follows. Catalyzes the conversion of uracil and 5-phospho-alpha-D-ribose 1-diphosphate (PRPP) to UMP and diphosphate. This is Uracil phosphoribosyltransferase from Streptococcus salivarius.